Reading from the N-terminus, the 450-residue chain is Folate synthesis bifunctional protein (450 aa).

Residues 1–166 (MTSWNFVCLS…TFAELAAIYP (166 aa)) are HPPK. The Pterin-binding domain occupies 180-441 (TQIMGIVNIT…QVEGNRRALA (262 aa)). The DHPS stretch occupies residues 182–450 (IMGIVNITDN…AAAAWAGMFV (269 aa)). Asn-187 lines the Mg(2+) pocket. (7,8-dihydropterin-6-yl)methyl diphosphate contacts are provided by residues Thr-227, Asp-267, Asn-287, Asp-358, Lys-395, and 429 to 431 (RVH).

This sequence in the C-terminal section; belongs to the DHPS family. In the N-terminal section; belongs to the HPPK family. It depends on Mg(2+) as a cofactor.

The enzyme catalyses 6-hydroxymethyl-7,8-dihydropterin + ATP = (7,8-dihydropterin-6-yl)methyl diphosphate + AMP + H(+). It catalyses the reaction (7,8-dihydropterin-6-yl)methyl diphosphate + 4-aminobenzoate = 7,8-dihydropteroate + diphosphate. Its pathway is cofactor biosynthesis; tetrahydrofolate biosynthesis; 2-amino-4-hydroxy-6-hydroxymethyl-7,8-dihydropteridine diphosphate from 7,8-dihydroneopterin triphosphate: step 4/4. The protein operates within cofactor biosynthesis; tetrahydrofolate biosynthesis; 7,8-dihydrofolate from 2-amino-4-hydroxy-6-hydroxymethyl-7,8-dihydropteridine diphosphate and 4-aminobenzoate: step 1/2. This is Folate synthesis bifunctional protein (folKP) from Chlamydia trachomatis serovar D (strain ATCC VR-885 / DSM 19411 / UW-3/Cx).